A 139-amino-acid polypeptide reads, in one-letter code: Transcription antitermination protein NusB (139 aa).

The protein belongs to the NusB family.

Its function is as follows. Involved in transcription antitermination. Required for transcription of ribosomal RNA (rRNA) genes. Binds specifically to the boxA antiterminator sequence of the ribosomal RNA (rrn) operons. The sequence is that of Transcription antitermination protein NusB from Escherichia coli (strain K12 / MC4100 / BW2952).